A 346-amino-acid chain; its full sequence is Biotin synthase (346 aa).

The region spanning Gln38–Thr256 is the Radical SAM core domain. Cys53, Cys57, and Cys60 together coordinate [4Fe-4S] cluster. The [2Fe-2S] cluster site is built by Cys97, Cys128, Cys188, and Arg260.

It belongs to the radical SAM superfamily. Biotin synthase family. In terms of assembly, homodimer. Requires [4Fe-4S] cluster as cofactor. [2Fe-2S] cluster serves as cofactor.

The catalysed reaction is (4R,5S)-dethiobiotin + (sulfur carrier)-SH + 2 reduced [2Fe-2S]-[ferredoxin] + 2 S-adenosyl-L-methionine = (sulfur carrier)-H + biotin + 2 5'-deoxyadenosine + 2 L-methionine + 2 oxidized [2Fe-2S]-[ferredoxin]. It participates in cofactor biosynthesis; biotin biosynthesis; biotin from 7,8-diaminononanoate: step 2/2. Catalyzes the conversion of dethiobiotin (DTB) to biotin by the insertion of a sulfur atom into dethiobiotin via a radical-based mechanism. The chain is Biotin synthase from Salmonella choleraesuis (strain SC-B67).